Reading from the N-terminus, the 143-residue chain is MFMGEYQHAIDPKGRLFMPARLRESLGEAFVATKGLDGCLFVYPKEEWKRLEEKLKALPFTRADARAFQRFFFSGAGECEVDKQGRILVPAHLREHAALEKDVVIIGAGARVEIWSRERWSKYNEKAAPSYEEVAEKLIDFDL.

SpoVT-AbrB domains are found at residues Glu-5–Glu-47 and Ala-76–Arg-119.

The protein belongs to the MraZ family. In terms of assembly, forms oligomers.

The protein resides in the cytoplasm. It localises to the nucleoid. This Heliobacterium modesticaldum (strain ATCC 51547 / Ice1) protein is Transcriptional regulator MraZ.